The sequence spans 865 residues: DNA mismatch repair protein MutS (865 aa).

Residue 605–612 coordinates ATP; sequence GPNMAGKS. Positions 814–833 are disordered; that stretch reads PEPLEAYKPKGNKQPLSDEE.

It belongs to the DNA mismatch repair MutS family.

Its function is as follows. This protein is involved in the repair of mismatches in DNA. It is possible that it carries out the mismatch recognition step. This protein has a weak ATPase activity. This is DNA mismatch repair protein MutS from Halalkalibacterium halodurans (strain ATCC BAA-125 / DSM 18197 / FERM 7344 / JCM 9153 / C-125) (Bacillus halodurans).